The following is a 355-amino-acid chain: Ubiquinone biosynthesis protein COQ4 homolog, mitochondrial (355 aa).

Zn(2+) is bound by residues His-134, Asp-135, His-138, and Glu-150.

Belongs to the COQ4 family. In terms of assembly, component of a multi-subunit COQ enzyme complex. The cofactor is Zn(2+).

Its subcellular location is the mitochondrion inner membrane. The enzyme catalyses a 4-hydroxy-3-methoxy-5-(all-trans-polyprenyl)benzoate + H(+) = a 2-methoxy-6-(all-trans-polyprenyl)phenol + CO2. Its pathway is cofactor biosynthesis; ubiquinone biosynthesis. Lyase that catalyzes the C1-decarboxylation of 4-hydroxy-3-methoxy-5-(all-trans-polyprenyl)benzoic acid into 2-methoxy-6-(all-trans-polyprenyl)phenol during ubiquinone biosynthesis. This chain is Ubiquinone biosynthesis protein COQ4 homolog, mitochondrial, found in Plasmodium knowlesi (strain H).